Here is a 222-residue protein sequence, read N- to C-terminus: Ribonuclease 3 (222 aa).

The RNase III domain occupies 3 to 125 (SQSVAKKLNH…LFGAIYLDAG (123 aa)). E38 is a binding site for Mg(2+). D42 is an active-site residue. Mg(2+) is bound by residues D111 and E114. The active site involves E114. Residues 152–222 (DAKTRLQEWL…AEKALKELLA (71 aa)) form the DRBM domain.

This sequence belongs to the ribonuclease III family. Homodimer. Mg(2+) is required as a cofactor.

The protein localises to the cytoplasm. The catalysed reaction is Endonucleolytic cleavage to 5'-phosphomonoester.. Its function is as follows. Digests double-stranded RNA. Involved in the processing of primary rRNA transcript to yield the immediate precursors to the large and small rRNAs (23S and 16S). Processes some mRNAs, and tRNAs when they are encoded in the rRNA operon. Processes pre-crRNA and tracrRNA of type II CRISPR loci if present in the organism. In Dechloromonas aromatica (strain RCB), this protein is Ribonuclease 3.